The following is a 105-amino-acid chain: Small ribosomal subunit protein uS10 (105 aa).

Belongs to the universal ribosomal protein uS10 family. In terms of assembly, part of the 30S ribosomal subunit.

In terms of biological role, involved in the binding of tRNA to the ribosomes. This chain is Small ribosomal subunit protein uS10, found in Rickettsia bellii (strain OSU 85-389).